The sequence spans 399 residues: S-adenosylmethionine synthase (399 aa).

Histidine 17 contributes to the ATP binding site. Aspartate 19 lines the Mg(2+) pocket. Glutamate 52 is a binding site for K(+). Positions 65 and 109 each coordinate L-methionine. A flexible loop region spans residues 109–119; it reads QSADIAQGVDA. Residues 177–179, 243–244, aspartate 252, 258–259, alanine 275, and lysine 279 each bind ATP; these read DSK, KF, and RK. Aspartate 252 contacts L-methionine. Lysine 283 contributes to the L-methionine binding site.

The protein belongs to the AdoMet synthase family. In terms of assembly, homotetramer; dimer of dimers. It depends on Mg(2+) as a cofactor. Requires K(+) as cofactor.

It is found in the cytoplasm. It catalyses the reaction L-methionine + ATP + H2O = S-adenosyl-L-methionine + phosphate + diphosphate. Its pathway is amino-acid biosynthesis; S-adenosyl-L-methionine biosynthesis; S-adenosyl-L-methionine from L-methionine: step 1/1. Its function is as follows. Catalyzes the formation of S-adenosylmethionine (AdoMet) from methionine and ATP. The overall synthetic reaction is composed of two sequential steps, AdoMet formation and the subsequent tripolyphosphate hydrolysis which occurs prior to release of AdoMet from the enzyme. The polypeptide is S-adenosylmethionine synthase (Bradyrhizobium sp. (strain BTAi1 / ATCC BAA-1182)).